We begin with the raw amino-acid sequence, 482 residues long: tRNA sulfurtransferase (482 aa).

Residues 61–165 enclose the THUMP domain; sequence PVIADALTRI…NDKLMLVKAR (105 aa). ATP-binding positions include 183–184, lysine 265, glycine 287, and glutamine 296; that span reads LI. Cysteines 344 and 456 form a disulfide. A Rhodanese domain is found at 404–482; that stretch reads FDADQVILDI…GFTNVKVYRP (79 aa). Cysteine 456 serves as the catalytic Cysteine persulfide intermediate.

The protein belongs to the ThiI family.

It localises to the cytoplasm. The catalysed reaction is [ThiI sulfur-carrier protein]-S-sulfanyl-L-cysteine + a uridine in tRNA + 2 reduced [2Fe-2S]-[ferredoxin] + ATP + H(+) = [ThiI sulfur-carrier protein]-L-cysteine + a 4-thiouridine in tRNA + 2 oxidized [2Fe-2S]-[ferredoxin] + AMP + diphosphate. The enzyme catalyses [ThiS sulfur-carrier protein]-C-terminal Gly-Gly-AMP + S-sulfanyl-L-cysteinyl-[cysteine desulfurase] + AH2 = [ThiS sulfur-carrier protein]-C-terminal-Gly-aminoethanethioate + L-cysteinyl-[cysteine desulfurase] + A + AMP + 2 H(+). Its pathway is cofactor biosynthesis; thiamine diphosphate biosynthesis. Catalyzes the ATP-dependent transfer of a sulfur to tRNA to produce 4-thiouridine in position 8 of tRNAs, which functions as a near-UV photosensor. Also catalyzes the transfer of sulfur to the sulfur carrier protein ThiS, forming ThiS-thiocarboxylate. This is a step in the synthesis of thiazole, in the thiamine biosynthesis pathway. The sulfur is donated as persulfide by IscS. In Serratia proteamaculans (strain 568), this protein is tRNA sulfurtransferase.